The following is a 543-amino-acid chain: Sodium-dependent lysophosphatidylcholine symporter 1 (543 aa).

The span at 1–14 shows a compositional bias: low complexity; the sequence is MAKGEGAESGSAAG. Residues 1 to 34 form a disordered region; the sequence is MAKGEGAESGSAAGLLPTSILQSTERPAQVKKEP. The Cytoplasmic segment spans residues 1–40; that stretch reads MAKGEGAESGSAAGLLPTSILQSTERPAQVKKEPKKKKQQ. The chain crosses the membrane as a helical span at residues 41–70; the sequence is LSVCNKLCYALGGAPYQVTGCALGFFLQIY. At 71 to 94 the chain is on the extracellular side; the sequence is LLDVAQKDEEVVFCFSSFQVGPFS. A helical transmembrane segment spans residues 95-115; sequence ASIILFVGRAWDAITDPLVGL. At 116-127 the chain is on the cytoplasmic side; that stretch reads CISKSPWTCLGR. Residues 128–147 form a helical membrane-spanning segment; sequence LMPWIIFSTPLAVIAYFLIW. Residues 148 to 157 lie on the Extracellular side of the membrane; that stretch reads FVPDFPHGQT. The helical transmembrane segment at 158 to 182 threads the bilayer; sequence YWYLLFYCLFETMVTCFHVPYSALT. Topologically, residues 183 to 189 are cytoplasmic; sequence MFISTEQ. Residues 190-221 form a helical membrane-spanning segment; that stretch reads TERDSATAYRMTVEVLGTVLGTAIQGQIVGQA. Residues 222–241 lie on the Extracellular side of the membrane; it reads DTPCFQDLNSSTVASQSANH. A disulfide bond links Cys225 and Cys473. N-linked (GlcNAc...) asparagine glycosylation is found at Asn230 and Asn240. Residues 242–275 traverse the membrane as a helical segment; it reads THGTTSHRETQKAYLLAAGVIVCIYIICAVILIL. The Cytoplasmic segment spans residues 276-306; sequence GVREQREPYEAQQSEPIAYFRGLRLVMSHGP. The helical transmembrane segment at 307–333 threads the bilayer; that stretch reads YIKLITGFLFTSLAFMLVEGNFVLFCT. Over 334–344 the chain is Extracellular; that stretch reads YTLGFRNEFQN. A helical membrane pass occupies residues 345 to 363; the sequence is LLLAIMLSATLTIPIWQWF. Topologically, residues 364-367 are cytoplasmic; it reads LTRF. A helical transmembrane segment spans residues 368–389; that stretch reads GKKTAVYVGISSAVPFLILVAL. Topologically, residues 390-392 are extracellular; it reads MES. A helical transmembrane segment spans residues 393 to 429; the sequence is NLIITYAVAVAAGISVAAAFLLPWSMLPDVIDDFHLK. At 430–439 the chain is on the cytoplasmic side; the sequence is QPHFHGTEPI. The helical transmembrane segment at 440 to 466 threads the bilayer; the sequence is FFSFYVFFTKFASGVSLGISTLSLDFA. The Extracellular portion of the chain corresponds to 467–478; sequence GYQTRGCSQPER. Residues 479–502 traverse the membrane as a helical segment; that stretch reads VKFTLNMLVTMAPIVLILLGLLLF. The Cytoplasmic portion of the chain corresponds to 503–543; sequence KMYPIDEERRRQNKKALQALRDEASSSGCSETDSTELASIL.

This sequence belongs to the major facilitator superfamily. As to quaternary structure, interacts with ERVFRD-1/syncytin-2. As to expression, in placenta, associated with trophoblast cells.

The protein localises to the cell membrane. Its subcellular location is the endoplasmic reticulum membrane. It catalyses the reaction a 1-acyl-sn-glycero-3-phosphocholine(in) + Na(+)(in) = a 1-acyl-sn-glycero-3-phosphocholine(out) + Na(+)(out). The enzyme catalyses 1-(4Z,7Z,10Z,13Z,16Z,19Z-docosahexaenoyl)-sn-glycero-3-phosphocholine(in) + Na(+)(in) = 1-(4Z,7Z,10Z,13Z,16Z,19Z-docosahexaenoyl)-sn-glycero-3-phosphocholine(out) + Na(+)(out). The catalysed reaction is 1-(9Z-octadecenoyl)-sn-glycero-3-phosphocholine(in) + Na(+)(in) = 1-(9Z-octadecenoyl)-sn-glycero-3-phosphocholine(out) + Na(+)(out). It carries out the reaction 1-hexadecanoyl-sn-glycero-3-phosphocholine(in) + Na(+)(in) = 1-hexadecanoyl-sn-glycero-3-phosphocholine(out) + Na(+)(out). It catalyses the reaction a 1-acyl-sn-glycero-3-phosphoethanolamine(in) + Na(+)(in) = a 1-acyl-sn-glycero-3-phosphoethanolamine(out) + Na(+)(out). In terms of biological role, sodium-dependent lysophosphatidylcholine (LPC) symporter, which plays an essential role for blood-brain barrier formation and function. Specifically expressed in endothelium of the blood-brain barrier of micro-vessels and transports LPC into the brain. Transport of LPC is essential because it constitutes the major mechanism by which docosahexaenoic acid (DHA), an omega-3 fatty acid that is essential for normal brain growth and cognitive function, enters the brain. Transports LPC carrying long-chain fatty acids such LPC oleate and LPC palmitate with a minimum acyl chain length of 14 carbons. Does not transport docosahexaenoic acid in unesterified fatty acid. Specifically required for blood-brain barrier formation and function, probably by mediating lipid transport. Not required for central nervous system vascular morphogenesis. Acts as a transporter for tunicamycin, an inhibitor of asparagine-linked glycosylation. In placenta, acts as a receptor for ERVFRD-1/syncytin-2 and is required for trophoblast fusion. The polypeptide is Sodium-dependent lysophosphatidylcholine symporter 1 (Homo sapiens (Human)).